Reading from the N-terminus, the 54-residue chain is Small, acid-soluble spore protein gamma-type (54 aa).

The tract at residues 1 to 54 (MAKKNRNKQQQEMQQQQQQHQAEFANEFAEGSSAEQARQQQQKAAGKRQKKNQQ) is disordered. Low complexity-rich tracts occupy residues 10 to 21 (QQEMQQQQQQHQ) and 29 to 44 (AEGSSAEQARQQQQKA). Positions 45 to 54 (AGKRQKKNQQ) are enriched in basic residues.

This sequence belongs to the gamma-type SASP family.

SASP are proteins degraded in the first minutes of spore germination and provide amino acids for both new protein synthesis and metabolism. These proteins may be involved in dormant spore's high resistance to UV light. The sequence is that of Small, acid-soluble spore protein gamma-type (sspA) from Alkalihalophilus pseudofirmus (strain ATCC BAA-2126 / JCM 17055 / OF4) (Bacillus pseudofirmus).